Here is an 805-residue protein sequence, read N- to C-terminus: Leucine--tRNA ligase (805 aa).

The 'HIGH' region motif lies at P40–H51. The 'KMSKS' region motif lies at K576–S580. K579 lines the ATP pocket.

This sequence belongs to the class-I aminoacyl-tRNA synthetase family.

It is found in the cytoplasm. The catalysed reaction is tRNA(Leu) + L-leucine + ATP = L-leucyl-tRNA(Leu) + AMP + diphosphate. The chain is Leucine--tRNA ligase from Ligilactobacillus salivarius (strain UCC118) (Lactobacillus salivarius).